Here is a 1207-residue protein sequence, read N- to C-terminus: DNA-directed RNA polymerase subunit beta' (1207 aa).

Positions 60, 62, 75, and 78 each coordinate Zn(2+). Residues aspartate 449, aspartate 451, and aspartate 453 each contribute to the Mg(2+) site. Cysteine 822, cysteine 896, cysteine 903, and cysteine 906 together coordinate Zn(2+).

This sequence belongs to the RNA polymerase beta' chain family. As to quaternary structure, the RNAP catalytic core consists of 2 alpha, 1 beta, 1 beta' and 1 omega subunit. When a sigma factor is associated with the core the holoenzyme is formed, which can initiate transcription. Requires Mg(2+) as cofactor. Zn(2+) is required as a cofactor.

It carries out the reaction RNA(n) + a ribonucleoside 5'-triphosphate = RNA(n+1) + diphosphate. Its function is as follows. DNA-dependent RNA polymerase catalyzes the transcription of DNA into RNA using the four ribonucleoside triphosphates as substrates. The sequence is that of DNA-directed RNA polymerase subunit beta' from Staphylococcus aureus (strain NCTC 8325 / PS 47).